The primary structure comprises 153 residues: MTEGSPIKFELVDINAILQTLPHRFPMLLIDRVINIRADYSGIGIKNVTFNEPAFQGHFPERPVYPGVMMIEAMAQTAGVIGIKSVEGTEKPRAVYFLTIDKCKFRKPVLPGDTIEYHMRSLGRRKTMWWFHGDAKVNGQVVAEADVGAMLTD.

His58 is a catalytic residue.

Belongs to the thioester dehydratase family. FabZ subfamily.

It is found in the cytoplasm. The enzyme catalyses a (3R)-hydroxyacyl-[ACP] = a (2E)-enoyl-[ACP] + H2O. In terms of biological role, involved in unsaturated fatty acids biosynthesis. Catalyzes the dehydration of short chain beta-hydroxyacyl-ACPs and long chain saturated and unsaturated beta-hydroxyacyl-ACPs. In Bradyrhizobium diazoefficiens (strain JCM 10833 / BCRC 13528 / IAM 13628 / NBRC 14792 / USDA 110), this protein is 3-hydroxyacyl-[acyl-carrier-protein] dehydratase FabZ.